The following is a 697-amino-acid chain: ATP-dependent zinc metalloprotease FtsH (697 aa).

The segment at 1-23 (MSQNERDSLELERKNTPPDGPRL) is disordered. Over 1–29 (MSQNERDSLELERKNTPPDGPRLPERRPR) the chain is Cytoplasmic. Residues 30-50 (FSVWIYLAIFLALLVHFFLFW) traverse the membrane as a helical segment. The Periplasmic segment spans residues 51 to 158 (TGTDTSTIEY…QFTARIEENW (108 aa)). Residues 159–179 (FGGLLTWIFPLILIVALWVFL) form a helical membrane-spanning segment. The Cytoplasmic segment spans residues 180-697 (LRRMSPSSQV…TERPESSSAP (518 aa)). 251-258 (GPPGTGKT) lines the ATP pocket. His-474 contributes to the Zn(2+) binding site. Residue Glu-475 is part of the active site. Zn(2+) is bound by residues His-478 and Asp-550. Positions 649–697 (GPRPYGDYPSPNGKDVEELKDLQKGEPTSSSAVEAPAPQTERPESSSAP) are disordered. A compositionally biased stretch (basic and acidic residues) spans 662 to 672 (KDVEELKDLQK).

In the central section; belongs to the AAA ATPase family. It in the C-terminal section; belongs to the peptidase M41 family. As to quaternary structure, homohexamer. Zn(2+) is required as a cofactor.

It localises to the cell inner membrane. Its function is as follows. Acts as a processive, ATP-dependent zinc metallopeptidase for both cytoplasmic and membrane proteins. Plays a role in the quality control of integral membrane proteins. This chain is ATP-dependent zinc metalloprotease FtsH, found in Rhodothermus marinus (strain ATCC 43812 / DSM 4252 / R-10) (Rhodothermus obamensis).